The sequence spans 151 residues: Small ribosomal subunit protein uS19 (151 aa).

This sequence belongs to the universal ribosomal protein uS19 family.

Functionally, protein S19 forms a complex with S13 that binds strongly to the 16S ribosomal RNA. This Picrophilus torridus (strain ATCC 700027 / DSM 9790 / JCM 10055 / NBRC 100828 / KAW 2/3) protein is Small ribosomal subunit protein uS19.